A 375-amino-acid chain; its full sequence is Protein RIC-3 (375 aa).

Positions 1–29 (MALSAVQKVVLFSCLVLCVSLLLPRAYIA) are cleaved as a signal peptide. The Lumenal segment spans residues 30-90 (RGKPAAQEGN…GGGGGTRPSL (61 aa)). Polar residues predominate over residues 38–47 (GNTGLFQSSG). The disordered stretch occupies residues 38-63 (GNTGLFQSSGHHPKPTDGRPGGAHFP). Residues 91–111 (VGQIIPIYGFGILLYILYILF) traverse the membrane as a helical segment. Over 112–375 (KLSSKGKSTK…RKRNTKGIEY (264 aa)) the chain is Cytoplasmic. Positions 135-165 (KRKITDYELSQLQDKLKETEEAMEKIISRLG) form a coiled coil. The interval 251–375 (SAEQVAEQMG…RKRNTKGIEY (125 aa)) is disordered. Residues 286-296 (GDQQAQGTISA) are compositionally biased toward polar residues. Positions 305-319 (EDIEEDEDEDEDPEV) are enriched in acidic residues. The segment covering 365 to 375 (LRKRNTKGIEY) has biased composition (basic residues).

This sequence belongs to the ric-3 family.

It localises to the endoplasmic reticulum membrane. Its function is as follows. Molecular chaperone which facilitates proper subunit assembly andsurface trafficking of alpha-7 (CHRNA7) and alpha-8 (CHRNA8) nicotinic acetylcholine receptors. May also promote functional expression of homomeric serotoninergic 5-HT3 receptors, and of heteromeric acetylcholine receptors. This Xenopus tropicalis (Western clawed frog) protein is Protein RIC-3 (ric3).